A 257-amino-acid polypeptide reads, in one-letter code: Probable pectate lyase E (257 aa).

Positions 1-17 (MYQKLLLVPLLLTSALA) are cleaved as a signal peptide.

This sequence belongs to the polysaccharide lyase 3 family. Requires Ca(2+) as cofactor.

It is found in the secreted. It catalyses the reaction Eliminative cleavage of (1-&gt;4)-alpha-D-galacturonan to give oligosaccharides with 4-deoxy-alpha-D-galact-4-enuronosyl groups at their non-reducing ends.. Its function is as follows. Pectinolytic enzyme consist of four classes of enzymes: pectin lyase, polygalacturonase, pectin methylesterase and rhamnogalacturonase. Among pectinolytic enzymes, pectin lyase is the most important in depolymerization of pectin, since it cleaves internal glycosidic bonds of highly methylated pectins. Favors pectate, the anion, over pectin, the methyl ester. The polypeptide is Probable pectate lyase E (plyE) (Aspergillus flavus (strain ATCC 200026 / FGSC A1120 / IAM 13836 / NRRL 3357 / JCM 12722 / SRRC 167)).